The chain runs to 606 residues: Electron transfer flavoprotein-ubiquinone oxidoreductase, mitochondrial (606 aa).

59 to 73 (VVIVGAGPSGLSTAI) is an FAD binding site. Residues 448–468 (PSLHWGTIPGLIYGALEMYIF) form a helical membrane-spanning segment. [4Fe-4S] cluster-binding residues include Cys551, Cys575, Cys578, and Cys581.

The protein belongs to the ETF-QO/FixC family. As to quaternary structure, monomer. [4Fe-4S] cluster serves as cofactor. FAD is required as a cofactor.

It is found in the mitochondrion inner membrane. It catalyses the reaction a ubiquinone + reduced [electron-transfer flavoprotein] = a ubiquinol + oxidized [electron-transfer flavoprotein] + H(+). In terms of biological role, accepts electrons from ETF and reduces ubiquinone. In Dictyostelium discoideum (Social amoeba), this protein is Electron transfer flavoprotein-ubiquinone oxidoreductase, mitochondrial (etfdh).